Here is a 101-residue protein sequence, read N- to C-terminus: NAD(P)H-quinone oxidoreductase subunit 4L, chloroplastic (101 aa).

3 helical membrane passes run 2–22 (MLEH…YGLI), 32–52 (MCLE…SDLF), and 61–81 (IFSI…PAIV).

The protein belongs to the complex I subunit 4L family. In terms of assembly, NDH is composed of at least 16 different subunits, 5 of which are encoded in the nucleus.

It localises to the plastid. Its subcellular location is the chloroplast thylakoid membrane. The catalysed reaction is a plastoquinone + NADH + (n+1) H(+)(in) = a plastoquinol + NAD(+) + n H(+)(out). The enzyme catalyses a plastoquinone + NADPH + (n+1) H(+)(in) = a plastoquinol + NADP(+) + n H(+)(out). Functionally, NDH shuttles electrons from NAD(P)H:plastoquinone, via FMN and iron-sulfur (Fe-S) centers, to quinones in the photosynthetic chain and possibly in a chloroplast respiratory chain. The immediate electron acceptor for the enzyme in this species is believed to be plastoquinone. Couples the redox reaction to proton translocation, and thus conserves the redox energy in a proton gradient. This is NAD(P)H-quinone oxidoreductase subunit 4L, chloroplastic from Ceratophyllum demersum (Rigid hornwort).